Consider the following 175-residue polypeptide: Outer membrane protein assembly factor BamE (175 aa).

Positions 1-21 (MQNTKLLLTSFTFVGLLALAG) are cleaved as a signal peptide. Cys-22 carries the N-palmitoyl cysteine lipid modification. Residue Cys-22 is the site of S-diacylglycerol cysteine attachment. Disordered stretches follow at residues 117–147 (ALLG…KPGS) and 156–175 (IDNV…TSPQ).

The protein belongs to the BamE family. Part of the Bam complex.

The protein resides in the cell outer membrane. In terms of biological role, part of the outer membrane protein assembly complex, which is involved in assembly and insertion of beta-barrel proteins into the outer membrane. May have a structural role in maintaining the cell envelope integrity. This is Outer membrane protein assembly factor BamE from Pseudomonas fluorescens.